Reading from the N-terminus, the 499-residue chain is Tyrosine-protein kinase Blk (499 aa).

Residues methionine 1–proline 34 are disordered. Glycine 2 carries N-myristoyl glycine lipidation. The region spanning glutamate 52 to threonine 112 is the SH3 domain. In terms of domain architecture, SH2 spans tryptophan 118–cysteine 214. Residues leucine 235–tyrosine 488 form the Protein kinase domain. Residues leucine 241–valine 249 and lysine 263 each bind ATP. The Proton acceptor role is filled by aspartate 354. Tyrosine 383 is subject to Phosphotyrosine; by autocatalysis.

It belongs to the protein kinase superfamily. Tyr protein kinase family. SRC subfamily. In terms of assembly, interacts with CBL (via SH2 domain). Interacts with CD79A and CD79B (via SH2 domain). In terms of processing, phosphorylated on tyrosine residues after antibody-mediated surface engagement of the B-cell antigen receptor (BCR). Post-translationally, ubiquitination of activated BLK by the UBE3A ubiquitin protein ligase leads to its degradation by the ubiquitin-proteasome pathway. In terms of tissue distribution, expressed in immature Vgamma2 gamma-delta T-cells (at protein level). Expressed in the B-cell lineage.

It is found in the cell membrane. The catalysed reaction is L-tyrosyl-[protein] + ATP = O-phospho-L-tyrosyl-[protein] + ADP + H(+). Antibody-mediated surface engagement of the B-cell antigen receptor (BCR) which results in the phosphorylation of BLK on tyrosine residues, stimulates the enzymatic activity. Its function is as follows. Non-receptor tyrosine kinase involved in B-lymphocyte development, differentiation and signaling. B-cell receptor (BCR) signaling requires a tight regulation of several protein tyrosine kinases and phosphatases, and associated coreceptors. Binding of antigen to the B-cell antigen receptor (BCR) triggers signaling that ultimately leads to B-cell activation. Signaling through BLK plays an important role in transmitting signals through surface immunoglobulins and supports the pro-B to pre-B transition, as well as the signaling for growth arrest and apoptosis downstream of B-cell receptor. Specifically binds and phosphorylates CD79A at 'Tyr-188'and 'Tyr-199', as well as CD79B at 'Tyr-196' and 'Tyr-207'. Also phosphorylates the immunoglobulin G receptor FCGR2. With FYN and LYN, plays an essential role in pre-B-cell receptor (pre-BCR)-mediated NF-kappa-B activation. Also contributes to BTK activation by indirectly stimulating BTK intramolecular autophosphorylation. In pancreatic islets, acts as a modulator of beta-cells function through the up-regulation of PDX1 and NKX6-1 and consequent stimulation of insulin secretion in response to glucose. Phosphorylates CGAS, promoting retention of CGAS in the cytosol. In Mus musculus (Mouse), this protein is Tyrosine-protein kinase Blk (Blk).